The following is a 177-amino-acid chain: Superoxide dismutase [Cu-Zn] 1 (177 aa).

An N-terminal signal peptide occupies residues 1-20 (MKYTILSLVAGALISCSAMA). Cu cation contacts are provided by H69, H71, and H94. C76 and C172 are joined by a disulfide. Residues H94, H103, H112, and D115 each contribute to the Zn(2+) site. H150 provides a ligand contact to Cu cation.

It belongs to the Cu-Zn superoxide dismutase family. In terms of assembly, monomer. It depends on Cu cation as a cofactor. The cofactor is Zn(2+).

It localises to the periplasm. The catalysed reaction is 2 superoxide + 2 H(+) = H2O2 + O2. Destroys radicals which are normally produced within the cells and which are toxic to biological systems. In Salmonella typhimurium (strain 4/74), this protein is Superoxide dismutase [Cu-Zn] 1 (sodC1).